The sequence spans 331 residues: ADP-L-glycero-D-manno-heptose-6-epimerase (331 aa).

Residues 11–12 (FI), 32–33 (DN), K39, K54, 75–79 (EGACS), and N92 contribute to the NADP(+) site. Residue Y139 is the Proton acceptor of the active site. K143 is an NADP(+) binding site. A substrate-binding site is contributed by N168. V169 and K177 together coordinate NADP(+). K177 acts as the Proton acceptor in catalysis. Substrate-binding positions include R179, H186, 200–203 (FGEY), R213, and Y292.

The protein belongs to the NAD(P)-dependent epimerase/dehydratase family. HldD subfamily. As to quaternary structure, homopentamer. The cofactor is NADP(+).

It carries out the reaction ADP-D-glycero-beta-D-manno-heptose = ADP-L-glycero-beta-D-manno-heptose. Its pathway is nucleotide-sugar biosynthesis; ADP-L-glycero-beta-D-manno-heptose biosynthesis; ADP-L-glycero-beta-D-manno-heptose from D-glycero-beta-D-manno-heptose 7-phosphate: step 4/4. In terms of biological role, catalyzes the interconversion between ADP-D-glycero-beta-D-manno-heptose and ADP-L-glycero-beta-D-manno-heptose via an epimerization at carbon 6 of the heptose. In Ralstonia nicotianae (strain ATCC BAA-1114 / GMI1000) (Ralstonia solanacearum), this protein is ADP-L-glycero-D-manno-heptose-6-epimerase.